Reading from the N-terminus, the 255-residue chain is Pimeloyl-[acyl-carrier protein] methyl ester esterase (255 aa).

The region spanning 16–242 (LVLLHGWGMN…SSHAPFITEP (227 aa)) is the AB hydrolase-1 domain. Substrate-binding positions include W22, 82 to 83 (SL), and 143 to 147 (FMALQ). Residue S82 is the Nucleophile of the active site. Catalysis depends on residues D207 and H235. H235 provides a ligand contact to substrate.

It belongs to the AB hydrolase superfamily. Carboxylesterase BioH family. As to quaternary structure, monomer.

It is found in the cytoplasm. The catalysed reaction is 6-carboxyhexanoyl-[ACP] methyl ester + H2O = 6-carboxyhexanoyl-[ACP] + methanol + H(+). The protein operates within cofactor biosynthesis; biotin biosynthesis. The physiological role of BioH is to remove the methyl group introduced by BioC when the pimeloyl moiety is complete. It allows to synthesize pimeloyl-ACP via the fatty acid synthetic pathway through the hydrolysis of the ester bonds of pimeloyl-ACP esters. This is Pimeloyl-[acyl-carrier protein] methyl ester esterase from Vibrio vulnificus (strain YJ016).